A 246-amino-acid polypeptide reads, in one-letter code: Metallo-beta-lactamase type 2 (246 aa).

The signal sequence occupies residues 1–20; the sequence is MKKLFVLCVCFFCSITAAGA. Zn(2+) contacts are provided by H95, H97, D99, H157, and C176. D99 contacts a beta-lactam. The a beta-lactam site is built by K179 and N185. Zn(2+) is bound at residue H215.

This sequence belongs to the metallo-beta-lactamase superfamily. Class-B beta-lactamase family. As to quaternary structure, monomer. Zn(2+) serves as cofactor.

The protein localises to the periplasm. It catalyses the reaction a beta-lactam + H2O = a substituted beta-amino acid. Functionally, confers resistance to the different beta-lactam antibiotics (penicillin, cephalosporin and carbapenem) via the hydrolysis of the beta-lactam ring. Exhibits higher catalytic efficiency toward ticarcillin and piperacillin than blaIMP-1. Exhibits catalytic activity for carbapenem compounds, but has a preference for imipenem and ertapenem over meropenem. Has high efficiency for the hydrolysis of cefuroxime. Exhibits hydrolysis of all cephalosporins tested. Exhibits no hydrolysis of temocillin, the 6-alpha-methoxy semisynthetic derivative of ticarcillin. The polypeptide is Metallo-beta-lactamase type 2 (Pseudomonas aeruginosa).